The chain runs to 527 residues: Protein PyrBI (527 aa).

An aspartate carbamoyltransferase region spans residues 1–342 (MKRDFLGRTL…MFGGALEAPF (342 aa)). The interval 343-357 (DTSKKEEKPEEDFII) is linker. The interval 368 to 527 (VQKEGKRGIK…PHSFEEIWSI (160 aa)) is aspartate carbamoyltransferase regulatory region. Cys-483, Cys-488, Cys-512, and Cys-515 together coordinate Zn(2+).

In the N-terminal section; belongs to the aspartate/ornithine carbamoyltransferase superfamily. ATCase family. This sequence in the C-terminal section; belongs to the PyrI family.

The catalysed reaction is carbamoyl phosphate + L-aspartate = N-carbamoyl-L-aspartate + phosphate + H(+). It participates in pyrimidine metabolism; UMP biosynthesis via de novo pathway; (S)-dihydroorotate from bicarbonate: step 2/3. This is Protein PyrBI (pyrBI) from Thermotoga maritima (strain ATCC 43589 / DSM 3109 / JCM 10099 / NBRC 100826 / MSB8).